Here is a 279-residue protein sequence, read N- to C-terminus: Urease accessory protein UreD (279 aa).

It belongs to the UreD family. UreD, UreF and UreG form a complex that acts as a GTP-hydrolysis-dependent molecular chaperone, activating the urease apoprotein by helping to assemble the nickel containing metallocenter of UreC. The UreE protein probably delivers the nickel.

It localises to the cytoplasm. Its function is as follows. Required for maturation of urease via the functional incorporation of the urease nickel metallocenter. The chain is Urease accessory protein UreD from Pseudomonas fluorescens (strain Pf0-1).